A 225-amino-acid chain; its full sequence is MSNLKLDVHTADGKTNGSVELPASIFDVEASVALMHQVVTAQLAAKRQGTHATKGRGEVRGGGRKPFRQKGTGRARQGSIRAPHFTGGGTVHGPQPRDYSQRTPKKMKAAALRGALSDRARHSRIHVIEELVPGQIPSTKSARSFLERLTERKQILVVLTREDLTARKSVANLPNVHALPADQLNTYDVLHADDVVFSVEALDAFIKAASGANKAEDQNTKEEAK.

Positions 46–102 are disordered; that stretch reads KRQGTHATKGRGEVRGGGRKPFRQKGTGRARQGSIRAPHFTGGGTVHGPQPRDYSQR. Positions 62–73 are enriched in basic residues; sequence GGRKPFRQKGTG.

It belongs to the universal ribosomal protein uL4 family. In terms of assembly, part of the 50S ribosomal subunit.

Functionally, one of the primary rRNA binding proteins, this protein initially binds near the 5'-end of the 23S rRNA. It is important during the early stages of 50S assembly. It makes multiple contacts with different domains of the 23S rRNA in the assembled 50S subunit and ribosome. Its function is as follows. Forms part of the polypeptide exit tunnel. The polypeptide is Large ribosomal subunit protein uL4 (Corynebacterium urealyticum (strain ATCC 43042 / DSM 7109)).